A 1559-amino-acid chain; its full sequence is MTADKDKDKDKEKDRDRDRDRERDKRDKARESENARPRRSCTLEGGAKNYAESDHSEDEDNDNGATTEESARKSRKKPPKKKSRYERTDTGEITSYITEDDVVYRPGDCVYIESRRPNTPYFICSIQDFKLVHNSQACCRSPAPALCDPPACSLPVASQPPQHLSEAGRGPVGSKRDHLLMNVKWYYRQSEVPDSVYQHLVQDRHNENDSGRELVITDPVIKNRELFISDYVDTYHAAALRGKCNISHFSDIFAAREFKARVDSFFYILGYNPETRRLNSTQGEIRVGPSHQAKLPDLQPFPSPDGDTVTQHEELVWMPGVSDCDLLMYLRAARSMAAFAGMCDGGSTEDGCVAASRDDTTLNALNTLHESSYDAGKALQRLVKKPVPKLIEKCWTEDEVKRFVKGLRQYGKNFFRIRKELLPNKETGELITFYYYWKKTPEAASSRAHRRHRRQAVFRRIKTRTASTPVNTPSRPPSSEFLDLSSASEDDFDSEDSEQELKGYACRHCFTTTSKDWHHGGRENILLCTDCRIHFKKYGELPPIEKPVDPPPFMFKPVKEEDDGLSGKHSMRTRRSRGSMSTLRSGRKKQPASPDGRASPVNEDVRSSGRNSPSAASTSSNDSKAEAVKKSAKKVKEEAASPLKNTKRQREKVASDTEDTDRATSKKTKTQEISRPNSPSEGEGESSDSRSVNDEGSSDPKDIDQDNRSTSPSIPSPQDNESDSDSSAQQQMLQTQPPALQAPSGAASAPSTAPPGTTQLPTPGPTPSATTVPPQGSPATSQPPNQTQSTVAPAAHTLIQQTPTLHPPRLPSPHPPLQPMTAPPSQNSAQPHPQPSLHGQGPPGPHSLQTGPLLQHPGPPQPFGLTPQSSQGQGPLGPSPAAAHPHSTIQLPASQSALQPQQPPREQPLPPAPLAMPHIKPPPTTPIPQLPAPQAHKHPPHLSGPSPFSMNANLPPPPALKPLSSLSTHHPPSAHPPPLQLMPQSQPLPSSPAQPPGLTQSQSLPPPAASHPTTGGLHQVPSQSPFPQHPFVPGGPPPITPPSCPPTSTPPAGPSSSSQPPCSAAVSSGGNVPGAPSCPLPAVQIKEEALDEAEEPESPPPPPRSPSPEPTVVDTPSHASQSARFYKHLDRGYNSCARTDLYFMPLAGSKLAKKREEAIEKAKREAEQKAREEREREKEKEKEREREREREREAERAAQKASSSAHEGRLSDPQLSGPGHMRPSFEPPPTTIAAVPPYIGPDTPALRTLSEYARPHVMSPTNRNHPFYMPLNPTDPLLAYHMPGLYNVDPTIRERELREREIREREIRERELRERMKPGFEVKPPELDPLHPATNPMEHFARHSALTIPPAAGPHPFASFHPGLNPLERERLALAGPQLRPEMSYPDRLAAERIHAERMASLTSDPLARLQMFNVTPHHHQHSHIHSHLHLHQQDPLHQGSAGPVHPLVDPLTAGPHLARFPYPPGTLPNPLLGQPPHEHEMLRHPVFGTPYPRDLPGAIPPPMSAAHQLQAMHAQSAELQRLAMEQQWLHGHPHMHGGHLPSQEDYYSRLKKEGDKQL.

Residues 1–36 show a composition bias toward basic and acidic residues; that stretch reads MTADKDKDKDKEKDRDRDRDRERDKRDKARESENAR. A disordered region spans residues 1–89; it reads MTADKDKDKD…KKKSRYERTD (89 aa). Residues serine 53 and serine 56 each carry the phosphoserine modification. Residues 73 to 84 show a composition bias toward basic residues; sequence KSRKKPPKKKSR. In terms of domain architecture, BAH spans 102–282; the sequence is VVYRPGDCVY…PETRRLNSTQ (181 aa). A Phosphothreonine modification is found at threonine 119. Serine 141 and serine 303 each carry phosphoserine. Positions 283–386 constitute an ELM2 domain; it reads GEIRVGPSHQ…KALQRLVKKP (104 aa). An SANT domain is found at 390-442; it reads LIEKCWTEDEVKRFVKGLRQYGKNFFRIRKELLPNKETGELITFYYYWKKTPE. Positions 463–494 are disordered; that stretch reads TRTASTPVNTPSRPPSSEFLDLSSASEDDFDS. Positions 464-473 are enriched in polar residues; it reads RTASTPVNTP. Residues 478–487 show a composition bias toward low complexity; it reads SSEFLDLSSA. The GATA-type zinc finger occupies 507-532; the sequence is RHCFTTTSKDWHHGGRENILLCTDCR. The interval 541–1125 is disordered; it reads LPPIEKPVDP…PSHASQSARF (585 aa). Residue lysine 559 forms a Glycyl lysine isopeptide (Lys-Gly) (interchain with G-Cter in SUMO2) linkage. Phosphoserine is present on residues serine 593, serine 599, and serine 612. The span at 608–622 shows a compositional bias: low complexity; sequence SGRNSPSAASTSSND. A compositionally biased stretch (basic and acidic residues) spans 623–639; sequence SKAEAVKKSAKKVKEEA. Residue lysine 636 forms a Glycyl lysine isopeptide (Lys-Gly) (interchain with G-Cter in SUMO2) linkage. A phosphoserine mark is found at serine 641, serine 655, serine 674, and serine 678. Basic and acidic residues predominate over residues 651–672; it reads EKVASDTEDTDRATSKKTKTQE. Residues 687 to 707 are compositionally biased toward basic and acidic residues; the sequence is SDSRSVNDEGSSDPKDIDQDN. Positions 708–735 are enriched in polar residues; that stretch reads RSTSPSIPSPQDNESDSDSSAQQQMLQT. The span at 736-761 shows a compositional bias: low complexity; sequence QPPALQAPSGAASAPSTAPPGTTQLP. Residues 768–791 are compositionally biased toward polar residues; sequence SATTVPPQGSPATSQPPNQTQSTV. Residues 805–822 are compositionally biased toward pro residues; the sequence is LHPPRLPSPHPPLQPMTA. Over residues 890 to 900 the composition is skewed to low complexity; that stretch reads QLPASQSALQP. Residues 901 to 931 are compositionally biased toward pro residues; sequence QQPPREQPLPPAPLAMPHIKPPPTTPIPQLP. A compositionally biased stretch (low complexity) spans 961 to 971; it reads KPLSSLSTHHP. Residues 1027–1053 show a composition bias toward pro residues; that stretch reads PQHPFVPGGPPPITPPSCPPTSTPPAG. Low complexity predominate over residues 1054–1068; it reads PSSSSQPPCSAAVSS. Residues serine 1098, serine 1105, and serine 1107 each carry the phosphoserine modification. The segment covering 1098-1109 has biased composition (pro residues); it reads SPPPPPRSPSPE. The residue at position 1111 (threonine 1111) is a Phosphothreonine. A coiled-coil region spans residues 1148–1205; that stretch reads GSKLAKKREEAIEKAKREAEQKAREEREREKEKEKEREREREREREAERAAQKASSSA. Lysine 1150 is subject to N6-acetyllysine. Residues 1154 to 1198 are compositionally biased toward basic and acidic residues; sequence KREEAIEKAKREAEQKAREEREREKEKEKEREREREREREAERAA. The interval 1154-1239 is disordered; it reads KREEAIEKAK…TTIAAVPPYI (86 aa). Tyrosine 1252 is subject to Phosphotyrosine. Serine 1259 is modified (phosphoserine).

In terms of assembly, interacts with HDAC1 and ATN1. Interaction with ATN1 is improved when the poly-Gln region of ATN1 is extended. As to expression, widely expressed.

The protein localises to the nucleus. The protein resides in the PML body. Plays a role as a transcriptional repressor during development. May play a role in the control of cell survival. Interacts with FAT1. This Rattus norvegicus (Rat) protein is Arginine-glutamic acid dipeptide repeats protein (Rere).